The sequence spans 76 residues: cAMP-dependent protein kinase inhibitor alpha (76 aa).

Threonine 2 carries the post-translational modification Blocked amino end (Thr). Residues 49–76 (KAEGEGDAQRNPSEQTGEAQGEAAKQES) are disordered.

This sequence belongs to the PKI family.

Functionally, extremely potent competitive inhibitor of cAMP-dependent protein kinase activity, this protein interacts with the catalytic subunit of the enzyme after the cAMP-induced dissociation of its regulatory chains. This Gallus gallus (Chicken) protein is cAMP-dependent protein kinase inhibitor alpha (PKIA).